Here is a 708-residue protein sequence, read N- to C-terminus: Double-strand break repair protein MRE11 (708 aa).

At serine 2 the chain carries N-acetylserine. Serine 2 carries the phosphoserine modification. Residues aspartate 20, histidine 22, and aspartate 60 each coordinate Mn(2+). Residues 87–117 (RPVQFEILSDQSVNFGFSKFPWVNYQDGNLN) form an interaction with NBN region. Residue asparagine 128 participates in Mn(2+) binding. Histidine 129 (proton donor) is an active-site residue. Mn(2+)-binding residues include histidine 217, histidine 245, and histidine 247. A Glycyl lysine isopeptide (Lys-Gly) (interchain with G-Cter in SUMO2) cross-link involves residue lysine 255. A Phosphoserine modification is found at serine 275. Lysine 282 is covalently cross-linked (Glycyl lysine isopeptide (Lys-Gly) (interchain with G-Cter in UFM1)). A Glycyl lysine isopeptide (Lys-Gly) (interchain with G-Cter in ubiquitin) cross-link involves residue lysine 339. Residue lysine 384 forms a Glycyl lysine isopeptide (Lys-Gly) (interchain with G-Cter in SUMO) linkage. Lysine 416 participates in a covalent cross-link: Glycyl lysine isopeptide (Lys-Gly) (interchain with G-Cter in SUMO2). A Glycyl lysine isopeptide (Lys-Gly) (interchain with G-Cter in SUMO) cross-link involves residue lysine 467. Residue lysine 480 forms a Glycyl lysine isopeptide (Lys-Gly) (interchain with G-Cter in ubiquitin) linkage. Disordered regions lie at residues 507 to 540 (TRQK…ASAF) and 556 to 614 (NDSD…AVSA). The span at 569–579 (GRGRGRGRRGG) shows a compositional bias: basic residues. 9 positions are modified to asymmetric dimethylarginine: arginine 570, arginine 572, arginine 574, arginine 576, arginine 577, arginine 580, arginine 587, arginine 592, and arginine 594. The GAR motif lies at 570–594 (RGRGRGRRGGRGQNSASRGGSQRGR). Residues 599–614 (LETSTRSRNSKTAVSA) show a composition bias toward polar residues. Serine 619 carries the phosphoserine modification. Lysine 625 is covalently cross-linked (Glycyl lysine isopeptide (Lys-Gly) (interchain with G-Cter in SUMO2)). Serine 641 bears the Phosphoserine mark. Serine 649 carries the phosphoserine; by PLK1 modification. The disordered stretch occupies residues 651–708 (VEEDIFPTTSKTDQRWSSTSSSKIMSQSQVSKGVDFESSEDDDDDPFMNTSSLRRNRR). A compositionally biased stretch (low complexity) spans 667–681 (SSTSSSKIMSQSQVS). Lysine 673 is modified (N6-lactoyllysine). 2 positions are modified to phosphoserine; by ATM: serine 676 and serine 678. Residues 687-696 (ESSEDDDDDP) show a composition bias toward acidic residues. Serine 688 carries the post-translational modification Phosphoserine; by CDK2. Phosphoserine is present on residues serine 689 and serine 701. A compositionally biased stretch (polar residues) spans 698–708 (MNTSSLRRNRR).

It belongs to the MRE11/RAD32 family. Component of the MRN complex composed of two heterodimers RAD50 and MRE11 associated with a single NBN. The MRN complexes dimerize on DNA to form joined MRN-MRN oligomers required for DNA double-strand break repair. As part of the MRN complex, interacts with MCM9; the interaction recruits the complex to DNA repair sites. Component of the BASC complex, at least composed of BRCA1, MSH2, MSH6, MLH1, ATM, BLM, RAD50, MRE11 and NBN. Found in a complex with TERF2. Interacts with DCLRE1C/Artemis and DCLRE1B/Apollo. Interacts with ATF2. Interacts with EXD2. Interacts with MRNIP. Interacts with SAMHD1; leading to stimulate 3'-5' exonuclease activity. Interacts (when ubiquitinated) with UBQLN4 (via its UBA domain). Interacts with CYREN (via XLF motif). Interacts with GFI1; promoting methylation by PRMT1. Interacts with DYNLL1; inhibiting the activity of MRE11. Interacts with C1QBP and RAD50; interaction takes place in absence of DNA damage to form the MRC (MRE11-RAD50-C1QBP) complex that inhibits the activity of MRE11. Interacts with AGER/RAGE. AGER is recruited to DNA double-strand break sites where it enhances MRE11 endonuclease activity to promote DNA repair. In terms of assembly, (Microbial infection) Interacts with herpes simplex virus 1 protein UL12. Mn(2+) serves as cofactor. Phosphorylated by ATM at Ser-676 and Ser-678 in response to DNA damage, promoting MRE11 activity: phosphorylation activates MRE11 by preventing the interaction between MRE11 and the C1QBP inhibitor. Phosphorylation at Ser-649 by PLK1 primes for phosphorylation at Ser-688 by CK2, inhibiting recruitment of the MRN complex to DNA damage sites. In terms of processing, asymmetric dimethylation by PRMT1 promotes MRE11 exonuclease activity. Post-translationally, lactylation at Lys-673 by CREBBP/CBP in response to DNA damage promotes DNA binding and MRE11 activity. Acetylated on lysine residues by KAT2A /GCN5. In terms of processing, ubiquitinated following DNA damage. Ubiquitination triggers interaction with UBQLN4, leading to MRE11 removal from chromatin and degradation by the proteasome. Ubiquitinated at Lys-339 and Lys-480 by RNF126 via 'Lys-27'- and 'Lys-29'-linked polyubiquitin chains, promoting the exonuclease activity of MRE11. Post-translationally, SUMOylated by PIAS1, stabilizing MRE11 on chromatin during end resection. DeSUMOylated by SENP3 following removal from DNA double-strand breaks (DSBs). Ufmylation at Lys-282 promotes MRE11 activity and is required for activation of the ATM and ATR kinases by the MRN complex. In terms of processing, (Microbial infection) Following infection by adenovirus E4, ubiquitinated and degraded by a SCF-like E3 ubiquitin ligase complex containing viral proteins E1B-55K and E4-ORF6.

Its subcellular location is the nucleus. It localises to the chromosome. The protein resides in the telomere. With respect to regulation, interaction with SAMHD1 stimulates the double-strand-specific 3'-5' exonuclease activity. RBBP8/CtIP specifically promotes the endonuclease activity to clear protein-DNA adducts and generate clean double-strand break ends. DYNLL1-binding inhibits the activity of MRE11. MRE11 activity is inhibited by C1QBP: in absence of DNA damage, C1QBP interacts with unphosphorylated MRE11, preventing formation and activity of the MRN complex. The mirin-derivative PFM39, specifically inhibits the 3'-5' exonuclease activity. The N-alkylated mirin-derivatives PFM03 and PFM01 specifically inhibit the endonuclease activity. Functionally, core component of the MRN complex, which plays a central role in double-strand break (DSB) repair, DNA recombination, maintenance of telomere integrity and meiosis. The MRN complex is involved in the repair of DNA double-strand breaks (DSBs) via homologous recombination (HR), an error-free mechanism which primarily occurs during S and G2 phases. The complex (1) mediates the end resection of damaged DNA, which generates proper single-stranded DNA, a key initial steps in HR, and is (2) required for the recruitment of other repair factors and efficient activation of ATM and ATR upon DNA damage. Within the MRN complex, MRE11 possesses both single-strand endonuclease activity and double-strand-specific 3'-5' exonuclease activity. After DSBs, MRE11 is loaded onto DSBs sites and cleaves DNA by cooperating with RBBP8/CtIP to initiate end resection. MRE11 first endonucleolytically cleaves the 5' strand at DNA DSB ends to prevent non-homologous end joining (NHEJ) and licence HR. It then generates a single-stranded DNA gap via 3' to 5' exonucleolytic degradation to create entry sites for EXO1- and DNA2-mediated 5' to 3' long-range resection, which is required for single-strand invasion and recombination. RBBP8/CtIP specifically promotes the endonuclease activity of MRE11 to clear protein-DNA adducts and generate clean double-strand break ends. MRE11 endonuclease activity is also enhanced by AGER/RAGE. The MRN complex is also required for DNA damage signaling via activation of the ATM and ATR kinases: the nuclease activity of MRE11 is not required to activate ATM and ATR. The MRN complex is also required for the processing of R-loops. The MRN complex is involved in the activation of the cGAS-STING pathway induced by DNA damage during tumorigenesis: the MRN complex acts by displacing CGAS from nucleosome sequestration, thereby activating it. In telomeres the MRN complex may modulate t-loop formation. MRE11 contains two DNA-binding domains (DBDs), enabling it to bind both single-stranded DNA (ssDNA) and double-stranded DNA (dsDNA). In Homo sapiens (Human), this protein is Double-strand break repair protein MRE11.